Here is a 403-residue protein sequence, read N- to C-terminus: L-lactate oxidase (403 aa).

Positions 21 to 375 (EGSVDFVNVF…KHFKLRHNPY (355 aa)) constitute an FMN hydroxy acid dehydrogenase domain. Tyrosine 47 contacts pyruvate. FMN is bound by residues 99–101 (PVA), serine 128, and glutamine 150. Residue tyrosine 152 coordinates pyruvate. Residue threonine 178 participates in FMN binding. 2 residues coordinate pyruvate: arginine 187 and tyrosine 220. FMN is bound at residue lysine 246. Pyruvate contacts are provided by histidine 270 and arginine 273. Residue histidine 270 is the Proton acceptor of the active site. FMN is bound by residues 301–305 (DSGVR) and arginine 325.

It belongs to the FMN-dependent alpha-hydroxy acid dehydrogenase family. Homotetramer. It depends on FMN as a cofactor.

It catalyses the reaction (S)-lactate + O2 = pyruvate + H2O2. Catalyzes the oxidation of (S)-lactate (L-lactate) to pyruvate, with a reduction of O2 to H2O2. Is likely involved in the L-lactate aerobic metabolism of S.iniae that enables the bacterium to utilize L-lactate as an energy source for growth under aerobic conditions in the absence (or at low concentrations) of glucose. The polypeptide is L-lactate oxidase (Streptococcus iniae (Streptococcus shiloi)).